The following is a 321-amino-acid chain: MVRIAYLGPEGTFTEAALVRMVAAGLVPETGPDALQRMPVESAPAALAAVRDGGADYACVPIENSIDGSVLPTLDSLAIGVRLQVFAETTLDVTFSIVVKPGRNAADVRTLAAFPVAAAQVRQWLAAHLPAADLRPAYSNADAARQVADGLVDAAVTSPLAAARWGLAALADGVVDESNARTRFVLVGRPGPPPARTGADRTSAVLRIDNQPGALVAALAEFGIRGIDLTRIESRPTRTELGTYLFFVDCVGHIDDEAVAEALKAVHRRCADVRYLGSWPTGPAAGAQPPLVDEASRWLARLRAGKPEQTLVRPDDQGAQA.

Residues 3–189 (RIAYLGPEGT…ARTRFVLVGR (187 aa)) enclose the Prephenate dehydratase domain. The ACT domain occupies 203–280 (SAVLRIDNQP…ADVRYLGSWP (78 aa)).

Homodimer.

It carries out the reaction prephenate + H(+) = 3-phenylpyruvate + CO2 + H2O. Its pathway is amino-acid biosynthesis; L-phenylalanine biosynthesis; phenylpyruvate from prephenate: step 1/1. The protein is Prephenate dehydratase (pheA) of Mycobacterium bovis (strain ATCC BAA-935 / AF2122/97).